Consider the following 603-residue polypeptide: Phosphogluconate dehydratase (603 aa).

[4Fe-4S] cluster-binding residues include Cys154 and Cys221.

This sequence belongs to the IlvD/Edd family. [4Fe-4S] cluster serves as cofactor.

It catalyses the reaction 6-phospho-D-gluconate = 2-dehydro-3-deoxy-6-phospho-D-gluconate + H2O. It participates in carbohydrate metabolism; Entner-Doudoroff pathway. Catalyzes the dehydration of 6-phospho-D-gluconate to 2-dehydro-3-deoxy-6-phospho-D-gluconate. The polypeptide is Phosphogluconate dehydratase (Escherichia coli O157:H7).